A 137-amino-acid chain; its full sequence is Large ribosomal subunit protein uL16 (137 aa).

Residues 1-19 are compositionally biased toward basic residues; it reads MLSPKKVKFRKQQRGRRTG. The tract at residues 1-20 is disordered; the sequence is MLSPKKVKFRKQQRGRRTGT.

The protein belongs to the universal ribosomal protein uL16 family. In terms of assembly, part of the 50S ribosomal subunit.

Functionally, binds 23S rRNA and is also seen to make contacts with the A and possibly P site tRNAs. This is Large ribosomal subunit protein uL16 from Desulfosudis oleivorans (strain DSM 6200 / JCM 39069 / Hxd3) (Desulfococcus oleovorans).